We begin with the raw amino-acid sequence, 148 residues long: MSVLSEFKAFAVKGNVVDMAVGIIIGAAFGKIVSSFVGDVIMPPLGLLIGGVDFSDLAITLRPAQGTAPAVLLAYGKFIQTVIDFIIVAFAIFMGVKAINRLKREEAKAPTLPPTPSKQEVLLSEIRDLLKEQNKPAAPVTVDPTRPL.

The next 2 helical transmembrane spans lie at 9–29 and 79–99; these read AFAVKGNVVDMAVGIIIGAAF and IQTVIDFIIVAFAIFMGVKAI.

The protein belongs to the MscL family. Homopentamer.

It localises to the cell inner membrane. Its function is as follows. Channel that opens in response to stretch forces in the membrane lipid bilayer. May participate in the regulation of osmotic pressure changes within the cell. This is Large-conductance mechanosensitive channel from Pseudomonas savastanoi pv. phaseolicola (strain 1448A / Race 6) (Pseudomonas syringae pv. phaseolicola (strain 1448A / Race 6)).